The sequence spans 40 residues: Dolichyl-diphosphooligosaccharide--protein glycosyltransferase subunit 4 (40 aa).

At 1–4 (MITD) the chain is on the lumenal side. Residues 5-25 (VQLAIFSNVLGVFLFLLVVAY) form a helical membrane-spanning segment. Topologically, residues 26-40 (HYINANTGKSSIKNK) are cytoplasmic.

It belongs to the OST4 family. As to quaternary structure, component of the oligosaccharyltransferase (OST) complex.

It localises to the endoplasmic reticulum membrane. Subunit of the oligosaccharyl transferase (OST) complex that catalyzes the initial transfer of a defined glycan (Glc(3)Man(9)GlcNAc(2) in eukaryotes) from the lipid carrier dolichol-pyrophosphate to an asparagine residue within an Asn-X-Ser/Thr consensus motif in nascent polypeptide chains, the first step in protein N-glycosylation. N-glycosylation occurs cotranslationally and the complex associates with the Sec61 complex at the channel-forming translocon complex that mediates protein translocation across the endoplasmic reticulum (ER). All subunits are required for a maximal enzyme activity. This chain is Dolichyl-diphosphooligosaccharide--protein glycosyltransferase subunit 4, found in Drosophila mojavensis (Fruit fly).